The sequence spans 129 residues: Small ribosomal subunit protein uS9 (129 aa).

Residues Val-110 to Arg-129 are disordered. Over residues Lys-114–Arg-129 the composition is skewed to basic residues.

It belongs to the universal ribosomal protein uS9 family.

The chain is Small ribosomal subunit protein uS9 from Chlorobaculum parvum (strain DSM 263 / NCIMB 8327) (Chlorobium vibrioforme subsp. thiosulfatophilum).